The sequence spans 130 residues: Small ribosomal subunit protein uS9 (130 aa).

Belongs to the universal ribosomal protein uS9 family.

This is Small ribosomal subunit protein uS9 from Neisseria meningitidis serogroup C (strain 053442).